We begin with the raw amino-acid sequence, 203 residues long: Holliday junction branch migration complex subunit RuvA (203 aa).

A domain I region spans residues 1 to 62 (MYEYFLGQVT…ENGMSLFGFF (62 aa)). The segment at 63-141 (DADEKALFEK…DLNVDVTGQT (79 aa)) is domain II. Residues 142–148 (ALDVDAP) form a flexible linker region. A domain III region spans residues 149–203 (AVDGALADALAALEALGYSKADVKKVTKKLETFSQTQGADTNTLLSEGLRLLMKK).

It belongs to the RuvA family. In terms of assembly, homotetramer. Forms an RuvA(8)-RuvB(12)-Holliday junction (HJ) complex. HJ DNA is sandwiched between 2 RuvA tetramers; dsDNA enters through RuvA and exits via RuvB. An RuvB hexamer assembles on each DNA strand where it exits the tetramer. Each RuvB hexamer is contacted by two RuvA subunits (via domain III) on 2 adjacent RuvB subunits; this complex drives branch migration. In the full resolvosome a probable DNA-RuvA(4)-RuvB(12)-RuvC(2) complex forms which resolves the HJ.

It localises to the cytoplasm. The RuvA-RuvB-RuvC complex processes Holliday junction (HJ) DNA during genetic recombination and DNA repair, while the RuvA-RuvB complex plays an important role in the rescue of blocked DNA replication forks via replication fork reversal (RFR). RuvA specifically binds to HJ cruciform DNA, conferring on it an open structure. The RuvB hexamer acts as an ATP-dependent pump, pulling dsDNA into and through the RuvAB complex. HJ branch migration allows RuvC to scan DNA until it finds its consensus sequence, where it cleaves and resolves the cruciform DNA. This Lactiplantibacillus plantarum (strain ATCC BAA-793 / NCIMB 8826 / WCFS1) (Lactobacillus plantarum) protein is Holliday junction branch migration complex subunit RuvA.